The chain runs to 95 residues: Small ribosomal subunit protein bS21 (95 aa).

Residues 56–95 form a disordered region; sequence KLARKKMQREGLLPMKPKPVFGAGPGAGRGGPAAGPRGPR. A compositionally biased stretch (gly residues) spans 78 to 88; that stretch reads AGPGAGRGGPA.

The protein belongs to the bacterial ribosomal protein bS21 family.

This Nitrobacter winogradskyi (strain ATCC 25391 / DSM 10237 / CIP 104748 / NCIMB 11846 / Nb-255) protein is Small ribosomal subunit protein bS21.